The sequence spans 229 residues: Pdp3-interacting factor 1 (229 aa).

Catalysis depends on Asp12, which acts as the Nucleophile. Positions 12, 14, and 176 each coordinate Mg(2+). Asp14 acts as the Proton donor in catalysis.

Belongs to the HAD-like hydrolase superfamily. In terms of assembly, component of the mst2 complex composed of at least eaf6, mst2, nto1, pdp3, ptf1, ptf2 and tfg3. Mg(2+) serves as cofactor.

It is found in the cytoplasm. It localises to the nucleus. The catalysed reaction is D-ribitol 5-phosphate + H2O = ribitol + phosphate. It carries out the reaction D-sorbitol 6-phosphate + H2O = D-sorbitol + phosphate. The enzyme catalyses sn-glycerol 1-phosphate + H2O = glycerol + phosphate. It catalyses the reaction D-erythrose 4-phosphate + H2O = D-erythrose + phosphate. In terms of biological role, component of the mst2 complex which is a highly specific H3 lysine 14 (H3K14) acetyltransferase that functions together with gcn5 to regulate global levels of H3K14 acetylation (H3K14ac), critical for DNA damage checkpoint activation. May also function as a sugar alcohol (polyol) phosphatase that prevents accumulation of toxic levels of polyol phosphates, which can impair glycolysis by inhibiting glucose-6-phosphate isomerase. This Schizosaccharomyces pombe (strain 972 / ATCC 24843) (Fission yeast) protein is Pdp3-interacting factor 1.